Here is a 590-residue protein sequence, read N- to C-terminus: (-)-alpha-terpineol synthase (590 aa).

Mg(2+) contacts are provided by aspartate 339, aspartate 343, aspartate 483, threonine 487, and glutamate 491. The DDXXD motif motif lies at 339-343; that stretch reads DDVYD.

This sequence belongs to the terpene synthase family. It depends on Mg(2+) as a cofactor.

The catalysed reaction is (2E)-geranyl diphosphate + H2O = (S)-alpha-terpineol + diphosphate. It functions in the pathway secondary metabolite biosynthesis; terpenoid biosynthesis. Mediates the conversion of geranyl diphosphate into alpha-terpineol, a monoterpenol. Monoterpenols contribute to the final grape and wine aroma and flavor. Also forms some 1,8-cineole and traces of other monoterpenoids. This is (-)-alpha-terpineol synthase from Vitis vinifera (Grape).